The chain runs to 310 residues: tRNA-cytidine(32) 2-sulfurtransferase (310 aa).

Residues 45–50 (SGGKDS) carry the PP-loop motif motif. 3 residues coordinate [4Fe-4S] cluster: cysteine 120, cysteine 123, and cysteine 211.

Belongs to the TtcA family. Homodimer. It depends on Mg(2+) as a cofactor. [4Fe-4S] cluster is required as a cofactor.

The protein localises to the cytoplasm. It carries out the reaction cytidine(32) in tRNA + S-sulfanyl-L-cysteinyl-[cysteine desulfurase] + AH2 + ATP = 2-thiocytidine(32) in tRNA + L-cysteinyl-[cysteine desulfurase] + A + AMP + diphosphate + H(+). It functions in the pathway tRNA modification. Functionally, catalyzes the ATP-dependent 2-thiolation of cytidine in position 32 of tRNA, to form 2-thiocytidine (s(2)C32). The sulfur atoms are provided by the cysteine/cysteine desulfurase (IscS) system. In Shewanella oneidensis (strain ATCC 700550 / JCM 31522 / CIP 106686 / LMG 19005 / NCIMB 14063 / MR-1), this protein is tRNA-cytidine(32) 2-sulfurtransferase.